Reading from the N-terminus, the 492-residue chain is Phosphatidylinositol-glycan biosynthesis class W protein (492 aa).

5 helical membrane-spanning segments follow: residues 26 to 46 (FILTLMPISVLFQRVVFATFF), 59 to 79 (FILEFFFIIVPFISAITFTEL), 82 to 102 (FLIVGMLITCLVVPMFAQKNV), 127 to 147 (YRAFVMAATCICILAVDFQVF), and 156 to 176 (TYGISLMDIGVGSVVLSGALV). The disordered stretch occupies residues 185–216 (IEKQQKKKREEEEDDNDKINKTSSSSSSSSSA). The N-linked (GlcNAc...) asparagine glycan is linked to Asn204. Over residues 205–216 (KTSSSSSSSSSA) the composition is skewed to low complexity. The helical transmembrane segment at 264-284 (YGLHWNFFFTLGFVSISLAFL) threads the bilayer. A glycan (N-linked (GlcNAc...) asparagine) is linked at Asn289. 4 helical membrane-spanning segments follow: residues 290-310 (ISAILGVVLICVYQFLLNSFG), 331-351 (ICSFVGYLAIYLIGTKIGTEL), 364-384 (FATKLLISSIVFYILWILCEI), and 399-419 (VLAILSINLFNFSINILITLI). The N-linked (GlcNAc...) asparagine glycan is linked to Asn424. A run of 2 helical transmembrane segments spans residues 437 to 457 (LFIFLLGNILTGLINFSMKTI) and 464 to 484 (SMIIITSYTFALCLLAFILDY).

Belongs to the PIGW family.

It localises to the endoplasmic reticulum membrane. The protein operates within glycolipid biosynthesis; glycosylphosphatidylinositol-anchor biosynthesis. Functionally, probable acetyltransferase, which acetylates the inositol ring of phosphatidylinositol during biosynthesis of GPI-anchor. This is Phosphatidylinositol-glycan biosynthesis class W protein from Dictyostelium discoideum (Social amoeba).